We begin with the raw amino-acid sequence, 115 residues long: NAD(P)H-quinone oxidoreductase subunit M (115 aa).

The protein belongs to the complex I NdhM subunit family. As to quaternary structure, NDH-1 can be composed of about 15 different subunits; different subcomplexes with different compositions have been identified which probably have different functions.

It is found in the cellular thylakoid membrane. It catalyses the reaction a plastoquinone + NADH + (n+1) H(+)(in) = a plastoquinol + NAD(+) + n H(+)(out). It carries out the reaction a plastoquinone + NADPH + (n+1) H(+)(in) = a plastoquinol + NADP(+) + n H(+)(out). NDH-1 shuttles electrons from an unknown electron donor, via FMN and iron-sulfur (Fe-S) centers, to quinones in the respiratory and/or the photosynthetic chain. The immediate electron acceptor for the enzyme in this species is believed to be plastoquinone. Couples the redox reaction to proton translocation, and thus conserves the redox energy in a proton gradient. Cyanobacterial NDH-1 also plays a role in inorganic carbon-concentration. In Prochlorococcus marinus (strain SARG / CCMP1375 / SS120), this protein is NAD(P)H-quinone oxidoreductase subunit M.